Reading from the N-terminus, the 239-residue chain is Ribonuclease 3 (239 aa).

In terms of domain architecture, RNase III spans 18–141 (YLTLEKALGY…LMAGVYLEAG (124 aa)). Residue Glu-54 coordinates Mg(2+). Residue Asp-58 is part of the active site. The Mg(2+) site is built by Ser-127 and Glu-130. Glu-130 is a catalytic residue. Residues 168-237 (DYKTALQELT…AYQALQKLKE (70 aa)) enclose the DRBM domain.

Belongs to the ribonuclease III family. As to quaternary structure, homodimer. Requires Mg(2+) as cofactor.

The protein resides in the cytoplasm. The enzyme catalyses Endonucleolytic cleavage to 5'-phosphomonoester.. In terms of biological role, digests double-stranded RNA. Involved in the processing of primary rRNA transcript to yield the immediate precursors to the large and small rRNAs (23S and 16S). Processes some mRNAs, and tRNAs when they are encoded in the rRNA operon. Processes pre-crRNA and tracrRNA of type II CRISPR loci if present in the organism. The protein is Ribonuclease 3 of Helicobacter pylori (strain P12).